The primary structure comprises 293 residues: tRNA pseudouridine synthase B (293 aa).

Residue Asp38 is the Nucleophile of the active site.

This sequence belongs to the pseudouridine synthase TruB family. Type 1 subfamily.

It carries out the reaction uridine(55) in tRNA = pseudouridine(55) in tRNA. In terms of biological role, responsible for synthesis of pseudouridine from uracil-55 in the psi GC loop of transfer RNAs. The polypeptide is tRNA pseudouridine synthase B (Trichormus variabilis (strain ATCC 29413 / PCC 7937) (Anabaena variabilis)).